The sequence spans 1227 residues: Protein transport protein Sec31A (1227 aa).

WD repeat units follow at residues 4-47, 64-111, 120-160, 166-206, 209-254, 258-298, and 301-342; these read KEID…EIFE, SSAH…AGDT, KHTG…TPMT, QPLE…PIIK, DHNN…SPLR, SHTR…VLYE, and TNMQ…DGLR. One copy of the WD 8; interaction with SEC13 repeat lies at 397 to 430; sequence SFSFGGKLVTFENAKPQQQPGIDQQPQHHYVYVS. 3 disordered regions span residues 804 to 875, 905 to 1008, and 1040 to 1075; these read EAIK…YSQA, QPVA…GWND, and ADPQAQMQQPPAAPVGTPSFQPQQLSTGQQAPLGPY. A compositionally biased stretch (low complexity) spans 905–924; the sequence is QPVAAPASASYPSPASNTNP. Over residues 925–945 the composition is skewed to pro residues; it reads PYLPAAQPVPSPLYPGQPQPS. Over residues 995–1006 the composition is skewed to polar residues; the sequence is PASQRTGPQNGW. A compositionally biased stretch (low complexity) spans 1040–1049; the sequence is ADPQAQMQQP. Over residues 1057 to 1069 the composition is skewed to polar residues; that stretch reads PSFQPQQLSTGQQ.

Belongs to the WD repeat SEC31 family. In terms of assembly, COPII is composed of at least 5 proteins: the SEC23/24 complex, the SEC13/31 complex and SAR1. SEC13 and SEC31 make a 2:2 tetramer that forms the edge element of the COPII outer coat. The tetramer self-assembles in multiple copies to form the complete polyhedral cage. Interacts (via WD 8) with SEC13.

The protein localises to the cytoplasm. It localises to the cytoplasmic vesicle. It is found in the COPII-coated vesicle membrane. The protein resides in the endoplasmic reticulum membrane. In terms of biological role, component of the coat protein complex II (COPII) which promotes the formation of transport vesicles from the endoplasmic reticulum (ER). The coat has two main functions, the physical deformation of the endoplasmic reticulum membrane into vesicles and the selection of cargo molecules. This chain is Protein transport protein Sec31A (SEC31A), found in Gallus gallus (Chicken).